Consider the following 363-residue polypeptide: Heme A synthase (363 aa).

Helical transmembrane passes span 21-41 (ALVR…VLVG), 107-127 (RLLA…FWVS), 138-158 (LVGI…MVAS), 174-194 (HLTL…GLAP), 207-227 (LAGF…LVAG), 268-288 (FVHR…MIAT), 301-321 (ATLL…TLLM), and 323-343 (VPLH…GFAA). Residue His270 coordinates heme. His331 provides a ligand contact to heme.

Belongs to the COX15/CtaA family. Type 2 subfamily. In terms of assembly, interacts with CtaB. It depends on heme b as a cofactor.

It is found in the cell membrane. It carries out the reaction Fe(II)-heme o + 2 A + H2O = Fe(II)-heme a + 2 AH2. It participates in porphyrin-containing compound metabolism; heme A biosynthesis; heme A from heme O: step 1/1. Its function is as follows. Catalyzes the conversion of heme O to heme A by two successive hydroxylations of the methyl group at C8. The first hydroxylation forms heme I, the second hydroxylation results in an unstable dihydroxymethyl group, which spontaneously dehydrates, resulting in the formyl group of heme A. In Mesorhizobium japonicum (strain LMG 29417 / CECT 9101 / MAFF 303099) (Mesorhizobium loti (strain MAFF 303099)), this protein is Heme A synthase.